Consider the following 284-residue polypeptide: Bifunctional protein FolD (284 aa).

Residues Gly163–Ser165, Ser188, and Ile229 each bind NADP(+).

It belongs to the tetrahydrofolate dehydrogenase/cyclohydrolase family. In terms of assembly, homodimer.

The enzyme catalyses (6R)-5,10-methylene-5,6,7,8-tetrahydrofolate + NADP(+) = (6R)-5,10-methenyltetrahydrofolate + NADPH. It catalyses the reaction (6R)-5,10-methenyltetrahydrofolate + H2O = (6R)-10-formyltetrahydrofolate + H(+). It participates in one-carbon metabolism; tetrahydrofolate interconversion. In terms of biological role, catalyzes the oxidation of 5,10-methylenetetrahydrofolate to 5,10-methenyltetrahydrofolate and then the hydrolysis of 5,10-methenyltetrahydrofolate to 10-formyltetrahydrofolate. The protein is Bifunctional protein FolD of Campylobacter hominis (strain ATCC BAA-381 / DSM 21671 / CCUG 45161 / LMG 19568 / NCTC 13146 / CH001A).